Here is a 124-residue protein sequence, read N- to C-terminus: Fluoride-specific ion channel FluC (124 aa).

Transmembrane regions (helical) follow at residues 4 to 24, 35 to 55, 63 to 83, and 96 to 116; these read IFYI…TTLV, YATF…FGYL, PYLK…FSAF, and ILIA…ATWT. 2 residues coordinate Na(+): Gly-75 and Thr-78.

It belongs to the fluoride channel Fluc/FEX (TC 1.A.43) family.

It is found in the cell inner membrane. The catalysed reaction is fluoride(in) = fluoride(out). Na(+) is not transported, but it plays an essential structural role and its presence is essential for fluoride channel function. Functionally, fluoride-specific ion channel. Important for reducing fluoride concentration in the cell, thus reducing its toxicity. The sequence is that of Fluoride-specific ion channel FluC from Flavobacterium psychrophilum (strain ATCC 49511 / DSM 21280 / CIP 103535 / JIP02/86).